A 325-amino-acid chain; its full sequence is Germination protease (325 aa).

Positions 1 to 7 (MYNVRTD) are excised as a propeptide.

It belongs to the peptidase A25 family. As to quaternary structure, homotetramer. Post-translationally, autoproteolytically processed. The inactive tetrameric zymogen termed p46 autoprocesses to a smaller form termed p41, which is active only during spore germination.

The catalysed reaction is Endopeptidase action with P4 Glu or Asp, P1 preferably Glu &gt; Asp, P1' hydrophobic and P2' Ala.. Initiates the rapid degradation of small, acid-soluble proteins during spore germination. In Clostridium perfringens (strain SM101 / Type A), this protein is Germination protease.